We begin with the raw amino-acid sequence, 174 residues long: NADH-quinone oxidoreductase subunit B (174 aa).

[4Fe-4S] cluster-binding residues include Cys-53, Cys-54, Cys-118, and Cys-148.

The protein belongs to the complex I 20 kDa subunit family. In terms of assembly, NDH-1 is composed of 14 different subunits. Subunits NuoB, C, D, E, F, and G constitute the peripheral sector of the complex. The cofactor is [4Fe-4S] cluster.

The protein resides in the cell inner membrane. It catalyses the reaction a quinone + NADH + 5 H(+)(in) = a quinol + NAD(+) + 4 H(+)(out). Its function is as follows. NDH-1 shuttles electrons from NADH, via FMN and iron-sulfur (Fe-S) centers, to quinones in the respiratory chain. Couples the redox reaction to proton translocation (for every two electrons transferred, four hydrogen ions are translocated across the cytoplasmic membrane), and thus conserves the redox energy in a proton gradient. This Ruegeria sp. (strain TM1040) (Silicibacter sp.) protein is NADH-quinone oxidoreductase subunit B.